The chain runs to 249 residues: Molybdate/tungstate transport system permease protein WtpB (249 aa).

Residues 1-5 lie on the Cytoplasmic side of the membrane; it reads MEKFD. Residues 6–26 form a helical membrane-spanning segment; the sequence is IAMTVFLVMIFLFIFLPIIYM. Residues 27–48 lie on the Extracellular side of the membrane; the sequence is LSNPGDLNQLLDKEVIEAFKTT. In terms of domain architecture, ABC transmembrane type-1 spans 45-240; it reads FKTTLLAGAV…LISIALFALL (196 aa). A helical membrane pass occupies residues 49 to 69; it reads LLAGAVATLIALIFGIPTGYI. The Cytoplasmic segment spans residues 70–93; the sequence is LARYDFKFKSFVEAVLDLPMAIPH. A helical transmembrane segment spans residues 94-114; that stretch reads SVIGIIILSFIYGIDIINFIG. Over 115-116 the chain is Extracellular; that stretch reads RY. A helical transmembrane segment spans residues 117 to 137; the sequence is VVDNFWGIVTVYLFVGIPFMV. Over 138–177 the chain is Cytoplasmic; sequence NSIRDGFLSVDEEIEYVSRTLGASKIRTFFEISLPLIKNN. The chain crosses the membrane as a helical span at residues 178 to 198; that stretch reads IISGIILSFARGISEVGAILI. Over 199 to 223 the chain is Extracellular; sequence IAYYPKTVPILIYERFMSFGLDASK. The chain crosses the membrane as a helical span at residues 224–244; the sequence is PISVGMILISIALFALLRMFG. The Cytoplasmic segment spans residues 245-249; sequence RMRGR.

The protein belongs to the binding-protein-dependent transport system permease family. The complex is composed of two ATP-binding proteins (WtpC), two transmembrane proteins (WtpB) and a solute-binding protein (WtpA).

The protein resides in the cell membrane. Part of the ABC transporter complex WtpABC involved in molybdate/tungstate import. Probably responsible for the translocation of the substrate across the membrane. The protein is Molybdate/tungstate transport system permease protein WtpB (wtpB) of Methanocaldococcus jannaschii (strain ATCC 43067 / DSM 2661 / JAL-1 / JCM 10045 / NBRC 100440) (Methanococcus jannaschii).